Here is a 232-residue protein sequence, read N- to C-terminus: Thiamine import ATP-binding protein ThiQ (232 aa).

The region spanning leucine 2 to isoleucine 230 is the ABC transporter domain. Glycine 32–serine 39 is an ATP binding site.

Belongs to the ABC transporter superfamily. Thiamine importer (TC 3.A.1.19.1) family. The complex is composed of two ATP-binding proteins (ThiQ), two transmembrane proteins (ThiP) and a solute-binding protein (ThiB).

It is found in the cell inner membrane. The catalysed reaction is thiamine(out) + ATP + H2O = thiamine(in) + ADP + phosphate + H(+). Its function is as follows. Part of the ABC transporter complex ThiBPQ involved in thiamine import. Responsible for energy coupling to the transport system. This chain is Thiamine import ATP-binding protein ThiQ, found in Shigella flexneri serotype 5b (strain 8401).